The following is a 1008-amino-acid chain: PAN2-PAN3 deadenylation complex catalytic subunit PAN2 (1008 aa).

WD repeat units follow at residues 29–68, 110–149, 158–198, 200–236, and 277–316; these read GQLT…PYSR, PSLG…VTRV, HMAG…FSDV, VQDN…AMAP, and AEVA…SFAE. The segment at 314–449 is linker; that stretch reads FAEFSAPTAF…TCTEASMSSK (136 aa). The USP domain maps to 450-755; it reads KVPRLYRKLE…RTVMMVYAVG (306 aa). The Exonuclease domain occupies 808–976; that stretch reads AIDAEFVVLK…EDSHTALLLY (169 aa). Residues D810, E812, D915, and D968 each contribute to the a divalent metal cation site.

The protein belongs to the peptidase C19 family. PAN2 subfamily. As to quaternary structure, forms a heterotrimer with an asymmetric homodimer of the regulatory subunit PAN3 to form the poly(A)-nuclease (PAN) deadenylation complex. It depends on a divalent metal cation as a cofactor.

Its subcellular location is the cytoplasm. The catalysed reaction is Exonucleolytic cleavage of poly(A) to 5'-AMP.. Positively regulated by the regulatory subunit PAN3. Catalytic subunit of the poly(A)-nuclease (PAN) deadenylation complex, one of two cytoplasmic mRNA deadenylases involved in mRNA turnover. PAN specifically shortens poly(A) tails of RNA and the activity is stimulated by poly(A)-binding protein PAB1. PAN deadenylation is followed by rapid degradation of the shortened mRNA tails by the CCR4-NOT complex. Deadenylated mRNAs are then degraded by two alternative mechanisms, namely exosome-mediated 3'-5' exonucleolytic degradation, or deadenylation-dependent mRNA decaping and subsequent 5'-3' exonucleolytic degradation by XRN1. May also be involved in post-transcriptional maturation of mRNA poly(A) tails. The sequence is that of PAN2-PAN3 deadenylation complex catalytic subunit PAN2 from Yarrowia lipolytica (strain CLIB 122 / E 150) (Yeast).